We begin with the raw amino-acid sequence, 673 residues long: UvrABC system protein B (673 aa).

One can recognise a Helicase ATP-binding domain in the interval Glu24–Arg182. Gly37–Thr44 serves as a coordination point for ATP. A Beta-hairpin motif is present at residues Tyr90 to Ile113. One can recognise a Helicase C-terminal domain in the interval Gln429–Lys591. The UVR domain occupies Thr634 to Ile669.

Belongs to the UvrB family. As to quaternary structure, forms a heterotetramer with UvrA during the search for lesions. Interacts with UvrC in an incision complex.

Its subcellular location is the cytoplasm. Functionally, the UvrABC repair system catalyzes the recognition and processing of DNA lesions. A damage recognition complex composed of 2 UvrA and 2 UvrB subunits scans DNA for abnormalities. Upon binding of the UvrA(2)B(2) complex to a putative damaged site, the DNA wraps around one UvrB monomer. DNA wrap is dependent on ATP binding by UvrB and probably causes local melting of the DNA helix, facilitating insertion of UvrB beta-hairpin between the DNA strands. Then UvrB probes one DNA strand for the presence of a lesion. If a lesion is found the UvrA subunits dissociate and the UvrB-DNA preincision complex is formed. This complex is subsequently bound by UvrC and the second UvrB is released. If no lesion is found, the DNA wraps around the other UvrB subunit that will check the other stand for damage. The chain is UvrABC system protein B from Cytophaga hutchinsonii (strain ATCC 33406 / DSM 1761 / CIP 103989 / NBRC 15051 / NCIMB 9469 / D465).